A 1063-amino-acid polypeptide reads, in one-letter code: Integrin alpha-8 (1063 aa).

An N-terminal signal peptide occupies residues 1-38; the sequence is MSPGASRGPRGSQAPLIAPLCCAAAALGMLLWSPACQA. Over 39-1012 the chain is Extracellular; sequence FNLDVEKLTV…TPNVSFSIPL (974 aa). 7 FG-GAP repeats span residues 44–105, 122–183, 188–240, 253–306, 307–372, 373–431, and 435–498; these read EKLT…GSAQ, NGTK…AYAE, RNSN…IANY, KQTE…STDM, TFIQ…LLFR, DPQI…GLNT, and QVLQ…LHPM. A glycan (N-linked (GlcNAc...) asparagine) is linked at asparagine 81. A disulfide bridge connects residues cysteine 96 and cysteine 106. Residue asparagine 122 is glycosylated (N-linked (GlcNAc...) asparagine). Cysteines 150 and 171 form a disulfide. Residue asparagine 177 is glycosylated (N-linked (GlcNAc...) asparagine). Residues cysteine 187 and cysteine 200 are joined by a disulfide bond. Residue asparagine 239 is glycosylated (N-linked (GlcNAc...) asparagine). Ca(2+)-binding residues include glutamate 275, threonine 277, aspartate 279, and glutamate 283. N-linked (GlcNAc...) asparagine glycosylation is found at asparagine 302 and asparagine 311. Aspartate 329, asparagine 331, aspartate 333, leucine 335, aspartate 337, aspartate 395, asparagine 397, aspartate 399, tyrosine 401, and aspartate 403 together coordinate Ca(2+). Residues 455–457 carry the Cell attachment site motif; the sequence is RGD. Residues aspartate 459, aspartate 461, asparagine 463, tyrosine 465, and aspartate 467 each coordinate Ca(2+). An N-linked (GlcNAc...) asparagine glycan is attached at asparagine 504. Disulfide bonds link cysteine 507/cysteine 518 and cysteine 524/cysteine 580. Residues asparagine 601 and asparagine 605 are each glycosylated (N-linked (GlcNAc...) asparagine). 2 cysteine pairs are disulfide-bonded: cysteine 641/cysteine 647 and cysteine 713/cysteine 726. Residues asparagine 719, asparagine 737, asparagine 753, asparagine 780, asparagine 896, and asparagine 923 are each glycosylated (N-linked (GlcNAc...) asparagine). 2 disulfide bridges follow: cysteine 867/cysteine 924 and cysteine 929/cysteine 934. Residue asparagine 1005 is glycosylated (N-linked (GlcNAc...) asparagine). Residues 1013-1033 form a helical membrane-spanning segment; sequence WVIILAILLGLLVLAILTLAL. Residues 1034–1063 are Cytoplasmic-facing; sequence WKCGFFDRARPPQEDMTDREQLTNDKTPEA.

The protein belongs to the integrin alpha chain family. Heterodimer of an alpha and a beta subunit. The alpha subunit is composed of a heavy and a light chain linked by a disulfide bond. Alpha-8 associates with beta-1. As to expression, expressed in mesenchymal cells, including alveolar myofibroblasts, kidney mesangial cells and hepatic stellar cells and vascular and visceral smooth muscle (at protein level).

Its subcellular location is the membrane. The protein localises to the cell membrane. In terms of biological role, integrin alpha-8/beta-1 functions in the genesis of kidney and probably of other organs by regulating the recruitment of mesenchymal cells into epithelial structures. It recognizes the sequence R-G-D in a wide array of ligands including TNC, FN1, SPP1 TGFB1, TGFB3 and VTN. NPNT is probably its functional ligand in kidney genesis. Neuronal receptor for TNC it mediates cell-cell interactions and regulates neurite outgrowth of sensory and motor neurons. This chain is Integrin alpha-8 (ITGA8), found in Homo sapiens (Human).